Consider the following 304-residue polypeptide: Quinolinate synthase 1 (304 aa).

Residues H24 and S41 each contribute to the iminosuccinate site. C86 is a [4Fe-4S] cluster binding site. Iminosuccinate is bound by residues 112 to 114 and S129; that span reads YVN. Position 171 (C171) interacts with [4Fe-4S] cluster. Residues 197–199 and T214 each bind iminosuccinate; that span reads HPE. A [4Fe-4S] cluster-binding site is contributed by C259.

Belongs to the quinolinate synthase family. Type 2 subfamily. Requires [4Fe-4S] cluster as cofactor.

The protein localises to the cytoplasm. The enzyme catalyses iminosuccinate + dihydroxyacetone phosphate = quinolinate + phosphate + 2 H2O + H(+). The protein operates within cofactor biosynthesis; NAD(+) biosynthesis; quinolinate from iminoaspartate: step 1/1. Its function is as follows. Catalyzes the condensation of iminoaspartate with dihydroxyacetone phosphate to form quinolinate. In Methanosarcina acetivorans (strain ATCC 35395 / DSM 2834 / JCM 12185 / C2A), this protein is Quinolinate synthase 1.